A 313-amino-acid polypeptide reads, in one-letter code: Protein FixB (313 aa).

FAD is bound at residue 255–283; it reads LYLAVGISGQIQHMVGANASQTIFAINKD.

The protein belongs to the ETF alpha-subunit/FixB family. Heterodimer of FixA and FixB.

It participates in amine and polyamine metabolism; carnitine metabolism. In terms of biological role, required for anaerobic carnitine reduction. May bring reductant to CaiA. The sequence is that of Protein FixB from Escherichia coli O6:K15:H31 (strain 536 / UPEC).